Consider the following 157-residue polypeptide: Protein-export protein SecB (157 aa).

The protein belongs to the SecB family. As to quaternary structure, homotetramer, a dimer of dimers. One homotetramer interacts with 1 SecA dimer.

It localises to the cytoplasm. Its function is as follows. One of the proteins required for the normal export of preproteins out of the cell cytoplasm. It is a molecular chaperone that binds to a subset of precursor proteins, maintaining them in a translocation-competent state. It also specifically binds to its receptor SecA. The chain is Protein-export protein SecB from Proteus mirabilis (strain HI4320).